Reading from the N-terminus, the 295-residue chain is Cytidine deaminase (295 aa).

2 CMP/dCMP-type deaminase domains span residues Thr-48–Ser-168 and Glu-187–Leu-295. Asn-89 to Glu-91 is a substrate binding site. His-102 serves as a coordination point for Zn(2+). Catalysis depends on Glu-104, which acts as the Proton donor. Residues Cys-129 and Cys-132 each coordinate Zn(2+).

The protein belongs to the cytidine and deoxycytidylate deaminase family. In terms of assembly, homodimer. The cofactor is Zn(2+).

It catalyses the reaction cytidine + H2O + H(+) = uridine + NH4(+). It carries out the reaction 2'-deoxycytidine + H2O + H(+) = 2'-deoxyuridine + NH4(+). In terms of biological role, this enzyme scavenges exogenous and endogenous cytidine and 2'-deoxycytidine for UMP synthesis. The polypeptide is Cytidine deaminase (Vibrio vulnificus (strain YJ016)).